The sequence spans 267 residues: Small ribosomal subunit protein uS2 (267 aa).

Residues 237–267 (IGESAAAPSEPALETASAEATAEGEQPGSQA) are disordered. A compositionally biased stretch (low complexity) spans 238–261 (GESAAAPSEPALETASAEATAEGE).

The protein belongs to the universal ribosomal protein uS2 family.

The protein is Small ribosomal subunit protein uS2 of Chelativorans sp. (strain BNC1).